The primary structure comprises 138 residues: Small ribosomal subunit protein uS11c (138 aa).

Residues 1–23 are disordered; it reads MAKPILRIGSRKNTRSGSRKNVR. A compositionally biased stretch (basic residues) spans 9–23; sequence GSRKNTRSGSRKNVR.

The protein belongs to the universal ribosomal protein uS11 family. In terms of assembly, part of the 30S ribosomal subunit.

It is found in the plastid. The protein localises to the chloroplast. The protein is Small ribosomal subunit protein uS11c of Aethionema grandiflorum (Persian stone-cress).